The following is an 863-amino-acid chain: Axin-1 (863 aa).

The interval 1–81 (MNVQEQGFPL…PEGSASPTPP (81 aa)) is disordered. The Tankyrase-binding motif signature appears at 20–29 (APRPPVPGEE). Over residues 34–61 (STDSRPVNHSFCSGKGTSIKSETSTATP) the composition is skewed to polar residues. At S75 the chain carries Phosphoserine. At S77 the chain carries Phosphoserine; by CK1. In terms of domain architecture, RGS spans 88 to 211 (SLHSLLDDQD…LKSDIYLEYT (124 aa)). Positions 209 to 338 (EYTRTGSESP…DADTLSLTDS (130 aa)) are interaction with TP53. Disordered stretches follow at residues 215-240 (SESP…YLPT), 249-268 (CDQD…SRLT), and 315-344 (ATSA…DGIP). Residue S217 is modified to Phosphoserine. Residues 249 to 258 (CDQDADEDDG) show a composition bias toward acidic residues. A compositionally biased stretch (low complexity) spans 325–339 (SLSSDADTLSLTDSS). An interaction with GSK3B region spans residues 348-432 (IRKQHRREMQ…EDGEMPSGPM (85 aa)). Residues 353–411 (RREMQESIQVNGRVPLPHIPRTYRMPKEIRVEPQKFAEELIHRLEAVQRTREAEEKLEE) form an interaction with SIAH1 region. The interaction with beta-catenin stretch occupies residues 433–501 (ASHKLPSVPA…SPDSGHVAKT (69 aa)). Phosphoserine; by CK1 is present on S468. The residue at position 480 (T480) is a Phosphothreonine; by GSK3-beta. S485 is subject to Phosphoserine; by GSK3-beta. Phosphoserine is present on residues S492 and S509. Positions 505–758 (GGTASGHGKH…PVLSVVPAVS (254 aa)) are interaction with RNF111. The span at 529–542 (HHRHVHHHVHHNSA) shows a compositional bias: basic residues. 2 disordered regions span residues 529–624 (HHRH…DAEK) and 642–664 (HRKA…SRPL). The segment covering 543-554 (RPKEQMEAEVAR) has biased composition (basic and acidic residues). The interaction with PPP2CA stretch occupies residues 572 to 790 (PRSYSENAGT…CDSIVVAYYF (219 aa)). Polar residues predominate over residues 575–584 (YSENAGTTLS). Residues 678–753 (AQLRNSVQPS…RPACAPVLSV (76 aa)) are interaction with HIPK2. Residues 781–863 (CDSIVVAYYF…KIIGKVEKVD (83 aa)) form the DIX domain. Residues K858 and K861 each participate in a glycyl lysine isopeptide (Lys-Gly) (interchain with G-Cter in SUMO) cross-link.

Homodimer. Component of the beta-catenin destruction complex, containing at least CTNNB1, an axin and GSK3B, that regulates CTNNB1 protein levels through phosphorylation and ubiquitination. Interacts with GSK3B; the interaction hyperphosphorylates CTNNB1 leading to its ubiquitination and destruction. Interacts with DAXX; the interaction stimulates the interaction of DAXX with TP53, stimulates 'Ser-46' phosphorylation of TP53 and induces cell death on UV irradiation. Also interacts with APC, RNF111, SMAD6 and SMAD7. Interacts (via the C-terminal) with PPP1CA; the interaction dephosphorylates AXIN1 and regulates interaction with GSK3B. Interacts with PPP2CA; the interaction dephosphorylates AXIN1. Interacts with MDFI; the interaction decreases AXIN1-mediated JUN N-terminal kinase (JNK) activation. Interacts with MDFIC; the interaction inhibits beta-cateninin-mediated signaling and AXIN1-mediated JUN N-terminal kinase (JNK) activation. Binds ANKRD6, PIAS1, PIAS2, PIAS4, SUMO1, MAP3K1 and MAP3K4. Component of the AXIN1-HIPK2-TP53 complex. Interacts directly in the complex with TP53 and HIPK2. Interacts with DIXDC1; the interaction prevents interaction with MAP3K1. Interacts with AIDA; the interaction blocks the AXIN1-mediated JNK activation through disrupting AXIN1 homodimerization and Wnt signaling. Interacts with LRP5 (via its phosphorylated PPPSP motifs); the interaction is stimulated by WNT1 and GSK3B and activates beta-catenin signaling. Interacts with CTNNB1 (via the armadillo repeats 2-7). Interacts with MACF1. Found in a complex composed of MACF1, APC, AXIN1, CTNNB1 and GSK3B. Interacts with TNKS. Interacts with DAB2; the interaction is mutually exclusive with the AXIN1:PPP1CA interaction. Interacts with ZBED3 (via PPPSP motif); the interaction is direct, enhanced by protein kinase GSK3B and casein kinase CSNK1E activities and decreases GSK3B-induced beta-catenin serine and threonine phosphorylations. Interacts with WDR26. Interacts with GID8. Interacts with SIAH1 and SIAH2; both probably catalyze AXIN1 ubiquitination and subsequent proteasome-mediated ubiquitin-dependent degradation. Interaction with GSK3B and AXIN1 is competitive. In terms of processing, phosphorylation and dephosphorylation of AXIN1 regulates assembly and function of the beta-catenin complex. Phosphorylated by CK1 and GSK3B. Dephosphorylated by PPP1CA and PPP2CA. Phosphorylation by CK1 enhances binding of GSK3B to AXIN1. Also phosphorylated by CDK2 which regulates interaction with CTNBB1. Post-translationally, ADP-ribosylated by tankyrase TNKS and TNKS2. Poly-ADP-ribosylated protein is recognized by RNF146, followed by ubiquitination and subsequent activation of the Wnt signaling pathway. Ubiquitinated by RNF146 when poly-ADP-ribosylated, leading to its degradation and subsequent activation of the Wnt signaling pathway. Deubiquitinated by USP34, deubiquitinated downstream of beta-catenin stabilization step: deubiquitination is important for nuclear accumulation during Wnt signaling to positively regulate beta-catenin (CTNBB1)-mediated transcription. Sumoylation at Lys-858 and Lys-861 prevents ubiquitination and degradation. Sumoylation is required for AXIN1-mediated JNK activation. Ubiquitination by SIAH1 and SIAH2 induces its proteasomal degradation as part of the activation of the Wnt signaling pathway. As to expression, expressed in embryonic stem cells.

It localises to the cytoplasm. It is found in the nucleus. The protein localises to the cell membrane. Its subcellular location is the membrane. Its function is as follows. Component of the beta-catenin destruction complex required for regulating CTNNB1 levels through phosphorylation and ubiquitination, and modulating Wnt-signaling. Controls dorsoventral patterning via two opposing effects; down-regulates CTNNB1 to inhibit the Wnt signaling pathway and ventralize embryos, but also dorsalizes embryos by activating a Wnt-independent JNK signaling pathway. In Wnt signaling, probably facilitates the phosphorylation of CTNNB1 and APC by GSK3B. Likely to function as a tumor suppressor. Facilitates the phosphorylation of TP53 by HIPK2 upon ultraviolet irradiation. Enhances TGF-beta signaling by recruiting the RNF111 E3 ubiquitin ligase and promoting the degradation of inhibitory SMAD7. Also a component of the AXIN1-HIPK2-TP53 complex which controls cell growth, apoptosis and development. The polypeptide is Axin-1 (Axin1) (Mus musculus (Mouse)).